The following is a 404-amino-acid chain: Argininosuccinate synthase (404 aa).

ATP contacts are provided by residues 12–20 (AYSGGLDTS) and alanine 39. Residues tyrosine 91 and serine 96 each contribute to the L-citrulline site. ATP is bound at residue glycine 121. Residues threonine 123, asparagine 127, and aspartate 128 each coordinate L-aspartate. Asparagine 127 contributes to the L-citrulline binding site. 5 residues coordinate L-citrulline: arginine 131, serine 180, serine 189, glutamate 265, and tyrosine 277.

The protein belongs to the argininosuccinate synthase family. Type 1 subfamily. Homotetramer.

Its subcellular location is the cytoplasm. The enzyme catalyses L-citrulline + L-aspartate + ATP = 2-(N(omega)-L-arginino)succinate + AMP + diphosphate + H(+). It participates in amino-acid biosynthesis; L-arginine biosynthesis; L-arginine from L-ornithine and carbamoyl phosphate: step 2/3. In Vibrio campbellii (strain ATCC BAA-1116), this protein is Argininosuccinate synthase.